A 388-amino-acid chain; its full sequence is Flap endonuclease 1 (388 aa).

The segment at 1-104 (MGILGLSKLI…GELAKRAERR (104 aa)) is N-domain. Residue aspartate 34 coordinates Mg(2+). DNA is bound by residues arginine 47 and arginine 70. The Mg(2+) site is built by aspartate 86, glutamate 158, glutamate 160, aspartate 179, and aspartate 181. An I-domain region spans residues 122-253 (EIEKFNRRLV…KRAIELIKTY (132 aa)). Position 158 (glutamate 158) interacts with DNA. Positions 231 and 233 each coordinate DNA. Aspartate 233 provides a ligand contact to Mg(2+). The interval 336–344 (TQVRLDSFF) is interaction with PCNA. The interval 351–388 (PNATAAAKRKAEEIKKSANNKKAKTSGGSGAARGRRPK) is disordered.

It belongs to the XPG/RAD2 endonuclease family. FEN1 subfamily. As to quaternary structure, interacts with PCNA. Three molecules of FEN1 bind to one PCNA trimer with each molecule binding to one PCNA monomer. PCNA stimulates the nuclease activity without altering cleavage specificity. Mg(2+) serves as cofactor. Post-translationally, phosphorylated. Phosphorylation upon DNA damage induces relocalization to the nuclear plasma.

It is found in the nucleus. It localises to the nucleolus. Its subcellular location is the nucleoplasm. The protein resides in the mitochondrion. Structure-specific nuclease with 5'-flap endonuclease and 5'-3' exonuclease activities involved in DNA replication and repair. During DNA replication, cleaves the 5'-overhanging flap structure that is generated by displacement synthesis when DNA polymerase encounters the 5'-end of a downstream Okazaki fragment. It enters the flap from the 5'-end and then tracks to cleave the flap base, leaving a nick for ligation. Also involved in the long patch base excision repair (LP-BER) pathway, by cleaving within the apurinic/apyrimidinic (AP) site-terminated flap. Acts as a genome stabilization factor that prevents flaps from equilibrating into structures that lead to duplications and deletions. Also possesses 5'-3' exonuclease activity on nicked or gapped double-stranded DNA, and exhibits RNase H activity. Also involved in replication and repair of rDNA and in repairing mitochondrial DNA. This Drosophila mojavensis (Fruit fly) protein is Flap endonuclease 1.